The chain runs to 346 residues: 3-dehydroquinate synthase (346 aa).

NAD(+) is bound by residues 62 to 67, 96 to 100, 120 to 121, Lys133, and Lys142; these read DGEQYK, GVISD, and TT. Glu175, His234, and His251 together coordinate Zn(2+).

This sequence belongs to the sugar phosphate cyclases superfamily. Dehydroquinate synthase family. Requires Co(2+) as cofactor. Zn(2+) is required as a cofactor. It depends on NAD(+) as a cofactor.

Its subcellular location is the cytoplasm. It carries out the reaction 7-phospho-2-dehydro-3-deoxy-D-arabino-heptonate = 3-dehydroquinate + phosphate. It participates in metabolic intermediate biosynthesis; chorismate biosynthesis; chorismate from D-erythrose 4-phosphate and phosphoenolpyruvate: step 2/7. In terms of biological role, catalyzes the conversion of 3-deoxy-D-arabino-heptulosonate 7-phosphate (DAHP) to dehydroquinate (DHQ). This Campylobacter fetus subsp. fetus (strain 82-40) protein is 3-dehydroquinate synthase.